A 538-amino-acid chain; its full sequence is MEIKEISVPQQGVVADYMNGKKEIQSCFDYMLTEDAFKQRVQDLREREFFRQDLVTHLLEYNTKLQAGEATIQNVKALGDENTYVVIAGQQAGLLTGPLYTIHKIISVLQLAKEKEESLGVKVVPVFWIAGEDHDMDEINHTFVTKNKKIKKTIFHDRNPKKASASESELSLEDCRKWIEEIFKTYPETNFTKDVLQFVDDSLRKSNTYVDFFGHLIMKMFVNSGLILVDSHHPELRKLEVPFFKQIVSKYKEVQEGLHNQQEVIKELGYKPIIETKSNAVHIFMEIDNERVLLEDNQGKFVGKDGTYSFSYEELIEEMERSPERFSNNVVTRPLMQEYVFPTLAFIGGPGELAYWSELQQVFHTIGFRMPPVVPRITITYIERDIATDLHDLQLQERDPFLNNVDKLRENWLSNQIEEPIDDRFVEAKKEIMNIHTSLQQFVKEIDPGLSAFAGKNEFKINEQIELLERMLKRNVEKKHEVELNKFRRIQFALRPLGAPQERVWNVCYYLNQFGLDFVDHVMEKTFSWNGKHHVIKL.

A coiled-coil region spans residues 460–484 (KINEQIELLERMLKRNVEKKHEVEL).

This sequence belongs to the BshC family.

Involved in bacillithiol (BSH) biosynthesis. May catalyze the last step of the pathway, the addition of cysteine to glucosamine malate (GlcN-Mal) to generate BSH. In Bacillus thuringiensis (strain Al Hakam), this protein is Putative cysteine ligase BshC.